Reading from the N-terminus, the 662-residue chain is Probable conjugal transfer protein TrbE part 2 (662 aa).

307–314 (GPTGSGKS) contacts ATP.

It belongs to the TrbE/VirB4 family.

The chain is Probable conjugal transfer protein TrbE part 2 (trbEB) from Sinorhizobium fredii (strain NBRC 101917 / NGR234).